Reading from the N-terminus, the 149-residue chain is Nascent polypeptide-associated complex subunit beta-2 (149 aa).

Residues 38–103 form the NAC-A/B domain; the sequence is DKDNTKLQAE…PKENTLNGLY (66 aa).

Belongs to the NAC-beta family. Part of the nascent polypeptide-associated complex (NAC), consisting of EGD2 and either EGD1 or BTT1. NAC associates with ribosomes via EGD1 or BTT1.

The protein resides in the cytoplasm. The protein localises to the nucleus. Its function is as follows. Acts as a component of the nascent polypeptide-associated complex (NAC), which promotes mitochondrial protein import by enhancing productive ribosome interactions with the outer mitochondrial membrane. Also blocks the inappropriate interaction of ribosomes translating non-secretory nascent polypeptides with translocation sites in the membrane of the endoplasmic reticulum. BTT1 may act as a transcription factor that exert a negative effect on the expression of several genes that are transcribed by RNA polymerase II. The chain is Nascent polypeptide-associated complex subunit beta-2 (BTT1) from Saccharomyces cerevisiae (strain YJM789) (Baker's yeast).